The chain runs to 203 residues: Translation machinery-associated protein 16 (203 aa).

The tract at residues 1–39 is disordered; it reads MPKAPKGKSAGREKKVIHPYSRKAAQITREAHKQEKKEK. ADP-ribosylserine is present on Ser9. A compositionally biased stretch (basic and acidic residues) spans 29–39; sequence REAHKQEKKEK.

The protein belongs to the TMA16 family. As to quaternary structure, associates with pre-60S ribosomal particles.

Its subcellular location is the nucleus. Its function is as follows. Involved in the biogenesis of the 60S ribosomal subunit in the nucleus. The chain is Translation machinery-associated protein 16 (TMA16) from Homo sapiens (Human).